The sequence spans 367 residues: tRNA/tmRNA (uracil-C(5))-methyltransferase (367 aa).

Residues Gln190, Tyr218, Asn223, Glu239, and Asp299 each contribute to the S-adenosyl-L-methionine site. The Nucleophile role is filled by Cys324. The active-site Proton acceptor is Glu358.

Belongs to the class I-like SAM-binding methyltransferase superfamily. RNA M5U methyltransferase family. TrmA subfamily.

It carries out the reaction uridine(54) in tRNA + S-adenosyl-L-methionine = 5-methyluridine(54) in tRNA + S-adenosyl-L-homocysteine + H(+). The enzyme catalyses uridine(341) in tmRNA + S-adenosyl-L-methionine = 5-methyluridine(341) in tmRNA + S-adenosyl-L-homocysteine + H(+). Its function is as follows. Dual-specificity methyltransferase that catalyzes the formation of 5-methyluridine at position 54 (m5U54) in all tRNAs, and that of position 341 (m5U341) in tmRNA (transfer-mRNA). The protein is tRNA/tmRNA (uracil-C(5))-methyltransferase of Serratia proteamaculans (strain 568).